A 493-amino-acid polypeptide reads, in one-letter code: MASPAPPEPAEQGSPALAAAPQAPPPPTRAPPEEPEGAAPPEEGAAAGAGRQVEEAAGGVAAVVTWLLGEPALWLGGRADELLSWKRPLHSLLAFVGANLVFWFLALTPWRVYHLISVMILTRVIMQIIKDMILSRTRGAQLWRSLSESWEVINSKPDERPGFSHCLAESWMNFSIFLQEMSVFKQQSPGKFCLLVCSVCTFFTILGSYIPGVILSYLLLLCAFLCPLFKCNDIGQKIYSKIKSCLLKLDFGIREYINQKKRERSEADKEKSHKDDSELDFSALCPKISLTTAAKELSVSDTDVSEVSWTDNGTFNLSEGYTPQTDTSDDLDRPSEEVFSRDLSDFPSLENGTGTNDEDELSLGLPTELKRKKEQLDGGPRRSTEKKSAAGLSLPLSSDQTLHLMSDLAGDVITAAVTAAVKDQLAGVRQALSQAAPSLGEDTDTEEGDDFELLDQSELDQIESELGLSQDQEAEAQQNKKSSGFLSNLLGGH.

Residues 1–52 (MASPAPPEPAEQGSPALAAAPQAPPPPTRAPPEEPEGAAPPEEGAAAGAGRQ) are disordered. Topologically, residues 1–55 (MASPAPPEPAEQGSPALAAAPQAPPPPTRAPPEEPEGAAPPEEGAAAGAGRQVEE) are cytoplasmic. Positions 37–52 (GAAPPEEGAAAGAGRQ) are enriched in low complexity. Residues 56-76 (AAGGVAAVVTWLLGEPALWLG) traverse the membrane as a helical segment. The Lumenal segment spans residues 77-87 (GRADELLSWKR). The tract at residues 80 to 229 (DELLSWKRPL…LLCAFLCPLF (150 aa)) is reticulon homology domain. Residues 88–108 (PLHSLLAFVGANLVFWFLALT) form a helical membrane-spanning segment. Over 109–114 (PWRVYH) the chain is Cytoplasmic. The chain crosses the membrane as a helical span at residues 115-135 (LISVMILTRVIMQIIKDMILS). Residues 136 to 204 (RTRGAQLWRS…LVCSVCTFFT (69 aa)) lie on the Lumenal side of the membrane. Phosphoserine is present on Ser-145. Position 147 is a phosphoserine; by CAMK2B (Ser-147). At Ser-149 the chain carries Phosphoserine. A helical membrane pass occupies residues 205-225 (ILGSYIPGVILSYLLLLCAFL). Topologically, residues 226-493 (CPLFKCNDIG…GFLSNLLGGH (268 aa)) are cytoplasmic. Positions 315-326 (FNLSEGYTPQTD) are enriched in polar residues. Disordered regions lie at residues 315–394 (FNLS…GLSL) and 435–493 (AAPS…LGGH). The segment covering 330 to 344 (DLDRPSEEVFSRDLS) has biased composition (basic and acidic residues). Phosphothreonine is present on Thr-353. The span at 368–388 (ELKRKKEQLDGGPRRSTEKKS) shows a compositional bias: basic and acidic residues. Acidic residues predominate over residues 441 to 463 (EDTDTEEGDDFELLDQSELDQIE). An LIR motif motif is present at residues 449-454 (DDFELL). Polar residues predominate over residues 467–486 (GLSQDQEAEAQQNKKSSGFL).

It belongs to the RETREG family. Homooligomer; oligomerization is enhanced following endoplasmic reticulum stress and is mediated by the reticulon homology domain. Interacts with ATG8 family modifier proteins MAP1LC3A, MAP1LC3B, GABARAP, GABARAPL1 and GABARAPL2. In terms of processing, phosphorylation at Ser-147 by CAMK2B enhances oligomerization and membrane scission and reticulophagy activity.

It is found in the golgi apparatus. The protein localises to the cis-Golgi network membrane. It localises to the endoplasmic reticulum membrane. Its function is as follows. Endoplasmic reticulum (ER)-anchored autophagy regulator which mediates ER delivery into lysosomes through sequestration into autophagosomes. Promotes membrane remodeling and ER scission via its membrane bending capacity and targets the fragments into autophagosomes via interaction with ATG8 family proteins. Active under basal conditions. Required for collagen quality control in a LIR motif-dependent manner. Required for long-term survival of nociceptive and autonomic ganglion neurons. This is Reticulophagy regulator 1 (RETREG1) from Bos taurus (Bovine).